The primary structure comprises 353 residues: Photosystem II protein D1 (353 aa).

At Thr2 the chain carries N-acetylthreonine. Position 2 is a phosphothreonine (Thr2). A run of 3 helical transmembrane segments spans residues 29-46 (YIGW…TATS), 118-133 (HFLL…EWEL), and 142-156 (WIAV…AATA). His118 serves as a coordination point for chlorophyll a. Tyr126 contacts pheophytin a. Asp170 and Glu189 together coordinate [CaMn4O5] cluster. A helical membrane pass occupies residues 197–218 (FHMLGVAGVFGGSLFSAMHGSL). His198 is a binding site for chlorophyll a. A quinone contacts are provided by residues His215 and 264-265 (SF). A Fe cation-binding site is contributed by His215. His272 serves as a coordination point for Fe cation. The chain crosses the membrane as a helical span at residues 274–288 (FLAAWPVVGIWFTAL). 4 residues coordinate [CaMn4O5] cluster: His332, Glu333, Asp342, and Ala344. A propeptide spanning residues 345–353 (AVESPSING) is cleaved from the precursor.

The protein belongs to the reaction center PufL/M/PsbA/D family. PSII is composed of 1 copy each of membrane proteins PsbA, PsbB, PsbC, PsbD, PsbE, PsbF, PsbH, PsbI, PsbJ, PsbK, PsbL, PsbM, PsbT, PsbX, PsbY, PsbZ, Psb30/Ycf12, at least 3 peripheral proteins of the oxygen-evolving complex and a large number of cofactors. It forms dimeric complexes. It depends on The D1/D2 heterodimer binds P680, chlorophylls that are the primary electron donor of PSII, and subsequent electron acceptors. It shares a non-heme iron and each subunit binds pheophytin, quinone, additional chlorophylls, carotenoids and lipids. D1 provides most of the ligands for the Mn4-Ca-O5 cluster of the oxygen-evolving complex (OEC). There is also a Cl(-1) ion associated with D1 and D2, which is required for oxygen evolution. The PSII complex binds additional chlorophylls, carotenoids and specific lipids. as a cofactor. In terms of processing, tyr-161 forms a radical intermediate that is referred to as redox-active TyrZ, YZ or Y-Z. Post-translationally, C-terminally processed by CTPA; processing is essential to allow assembly of the oxygen-evolving complex and thus photosynthetic growth.

It is found in the plastid. Its subcellular location is the chloroplast thylakoid membrane. It catalyses the reaction 2 a plastoquinone + 4 hnu + 2 H2O = 2 a plastoquinol + O2. Its function is as follows. Photosystem II (PSII) is a light-driven water:plastoquinone oxidoreductase that uses light energy to abstract electrons from H(2)O, generating O(2) and a proton gradient subsequently used for ATP formation. It consists of a core antenna complex that captures photons, and an electron transfer chain that converts photonic excitation into a charge separation. The D1/D2 (PsbA/PsbD) reaction center heterodimer binds P680, the primary electron donor of PSII as well as several subsequent electron acceptors. The chain is Photosystem II protein D1 from Sinapis alba (White mustard).